Reading from the N-terminus, the 157-residue chain is Probable chemoreceptor glutamine deamidase CheD (157 aa).

Belongs to the CheD family.

It catalyses the reaction L-glutaminyl-[protein] + H2O = L-glutamyl-[protein] + NH4(+). Probably deamidates glutamine residues to glutamate on methyl-accepting chemotaxis receptors (MCPs), playing an important role in chemotaxis. The protein is Probable chemoreceptor glutamine deamidase CheD of Archaeoglobus fulgidus (strain ATCC 49558 / DSM 4304 / JCM 9628 / NBRC 100126 / VC-16).